We begin with the raw amino-acid sequence, 185 residues long: Biofilm operon icaADBC HTH-type negative transcriptional regulator IcaR (185 aa).

One can recognise an HTH tetR-type domain in the interval 1-59 (MKDKIIDNAITLFSEKGYDGTTLDDISKSVNIKKASLYYHYDNKEEIYRKSVENCFNYF). Positions 22-41 (TLDDISKSVNIKKASLYYHY) form a DNA-binding region, H-T-H motif.

Homodimer.

Represses transcription of the icaADBC operon necessary for biofilm production. The chain is Biofilm operon icaADBC HTH-type negative transcriptional regulator IcaR (icaR) from Staphylococcus epidermidis (strain ATCC 35984 / DSM 28319 / BCRC 17069 / CCUG 31568 / BM 3577 / RP62A).